Here is a 189-residue protein sequence, read N- to C-terminus: Streptothricin acetyltransferase (189 aa).

The region spanning 44–189 (FALREVPADP…HALYMSMPCP (146 aa)) is the N-acetyltransferase domain. Residues 55–76 (LVKVFPDDGGSDGEDGAEGEDA) form a disordered region. A compositionally biased stretch (acidic residues) spans 63–75 (GGSDGEDGAEGED).

It belongs to the acetyltransferase family. GNAT subfamily.

The catalysed reaction is streptothricin F + acetyl-CoA = N(beta)-acetylstreptothricin F + CoA + H(+). Its function is as follows. Involved in resistance to streptothricin, a broad-spectrum antibiotic produced by streptomycetes. Detoxifies streptothricin via acetylation of the beta amino group of the first beta-lysyl moiety of streptothricin. The chain is Streptothricin acetyltransferase from Streptomyces lavendulae.